Reading from the N-terminus, the 26-residue chain is AINSESGVRSVVPQPCNALPNQGPEK.

Residues 1-26 are disordered; the sequence is AINSESGVRSVVPQPCNALPNQGPEK.

The chain is Unknown protein 16 from Pseudotsuga menziesii (Douglas-fir).